Here is a 261-residue protein sequence, read N- to C-terminus: Carnitinyl-CoA dehydratase (261 aa).

The active-site Nucleophile is Glu111. Glu131 (proton acceptor) is an active-site residue.

The protein belongs to the enoyl-CoA hydratase/isomerase family.

The catalysed reaction is (R)-carnitinyl-CoA = crotonobetainyl-CoA + H2O. It participates in amine and polyamine metabolism; carnitine metabolism. Functionally, catalyzes the reversible dehydration of L-carnitinyl-CoA to crotonobetainyl-CoA. The protein is Carnitinyl-CoA dehydratase of Salmonella dublin (strain CT_02021853).